We begin with the raw amino-acid sequence, 82 residues long: Three-finger toxin MALT0063C (82 aa).

Positions 1–21 (MRTLLLTLVVVTIVCLDLGNS) are cleaved as a signal peptide. Disulfide bonds link Cys24-Cys42, Cys35-Cys60, Cys64-Cys72, and Cys73-Cys78.

This sequence belongs to the three-finger toxin family. Short-chain subfamily. Expressed by the venom gland.

The protein localises to the secreted. The protein is Three-finger toxin MALT0063C of Micrurus altirostris (Uruguayan coral snake).